A 251-amino-acid polypeptide reads, in one-letter code: 14-3-3-like protein (251 aa).

It belongs to the 14-3-3 family.

This chain is 14-3-3-like protein, found in Fucus vesiculosus (Bladder wrack).